The chain runs to 165 residues: Putative TRAP transporter small permease protein HI_0051 (165 aa).

4 consecutive transmembrane segments (helical) span residues 20–40 (LEYLSILALVIMISLVFFNSV), 51–71 (FSEEFSRICFVYMISFGIILV), 94–114 (IVLIVANICVLIAMIFIAYGA), and 136–156 (LYLAAVISAVSYFFIVMFSMI).

This sequence belongs to the TRAP transporter small permease family.

Its subcellular location is the cell inner membrane. The chain is Putative TRAP transporter small permease protein HI_0051 from Haemophilus influenzae (strain ATCC 51907 / DSM 11121 / KW20 / Rd).